The chain runs to 150 residues: Catabolic 3-dehydroquinase 2 (150 aa).

The active-site Proton acceptor is the Tyr23. Substrate is bound by residues Asn74, His80, and Asp87. The Proton donor role is filled by His100. Substrate-binding positions include 101–102 (IT) and Arg111.

It belongs to the type-II 3-dehydroquinase family. As to quaternary structure, homododecamer. Adopts a ring-like structure, composed of an arrangement of two hexameric rings stacked on top of one another.

It carries out the reaction 3-dehydroquinate = 3-dehydroshikimate + H2O. It participates in aromatic compound metabolism; 3,4-dihydroxybenzoate biosynthesis; 3,4-dihydroxybenzoate from 3-dehydroquinate: step 1/2. Is involved in the catabolism of quinate. Allows the utilization of quinate as carbon source via the beta-ketoadipate pathway. This chain is Catabolic 3-dehydroquinase 2, found in Aspergillus flavus (strain ATCC 200026 / FGSC A1120 / IAM 13836 / NRRL 3357 / JCM 12722 / SRRC 167).